Here is a 329-residue protein sequence, read N- to C-terminus: Bile salt hydrolase/transferase (329 aa).

Residue Cys2 is the Nucleophile; acyl-thioester intermediate of the active site. Positions 2 and 18 each coordinate deoxycholate. Asn82 lines the taurine pocket.

It belongs to the peptidase C59 family. In terms of assembly, homotetramer. The tetramer consists of a dimer of dimers.

The catalysed reaction is glycocholate + H2O = cholate + glycine. The enzyme catalyses cholate + taurine = taurocholate + H2O. It catalyses the reaction taurodeoxycholate + H2O = deoxycholate + taurine. It carries out the reaction glycodeoxycholate + H2O = deoxycholate + glycine. The catalysed reaction is chenodeoxycholate + glycine = glycochenodeoxycholate + H2O. The enzyme catalyses taurochenodeoxycholate + H2O = chenodeoxycholate + taurine. It catalyses the reaction an L-alpha-amino acid + cholate = an N-choloyl-L-alpha-amino acid + H2O. It carries out the reaction an L-alpha-amino acid + taurocholate = an N-choloyl-L-alpha-amino acid + taurine. The catalysed reaction is glycocholate + an L-alpha-amino acid = an N-choloyl-L-alpha-amino acid + glycine. The enzyme catalyses cholate + L-histidine = L-histidocholate + H2O. It catalyses the reaction taurocholate + L-histidine = L-histidocholate + taurine. It carries out the reaction glycocholate + L-histidine = L-histidocholate + glycine. The catalysed reaction is cholate + L-arginine = L-arginocholate + H2O. The enzyme catalyses taurocholate + L-arginine = L-arginocholate + taurine. It catalyses the reaction glycocholate + L-arginine = L-arginocholate + glycine. It carries out the reaction cholate + L-phenylalanine = L-phenylalanocholate + H2O. The catalysed reaction is taurocholate + L-phenylalanine = L-phenylalanocholate + taurine. Its pathway is lipid metabolism; bile acid biosynthesis. In terms of biological role, possesses dual functions in bile acid metabolism. Acts as a bile salt hydrolase that catalyzes the deconjugation of glycine- and taurine-linked bile salts, which occurs naturally in the intestines of humans, releasing amino acid residues and deconjugated bile salts (bile acids). Can hydrolyze the amide bond in major human conjugated bile salts, such as glycocholate (GCA), taurocholate (TCA) and taurodeoxycholate (TDCA). Shows a slight preference for taurine-conjugated bile acids as substrates. Also acts as an amine N-acyltransferase that conjugates a wide variety of amino acids to conjugated and non-conjugated bile acids, thus producing bacterial bile acid amidates (BBAAs) - also named microbially conjugated bile acids (MCBAs) - in the gastrointestinal tract. These BBAAs may facilitate communication between the microbiota and host through the activation of human ligand-activated transcription factors. This chain is Bile salt hydrolase/transferase (cbh), found in Clostridium perfringens (strain 13 / Type A).